The following is a 2628-amino-acid chain: Hemagglutinin A (2628 aa).

An N-terminal signal peptide occupies residues 1–24; that stretch reads MRKLNSLFSLAVLLSLLCWGQTAA. Peptidase C25-like stretches follow at residues 25–539, 540–995, 996–1451, 1452–1907, and 2074–2628; these read AQGG…TPPP, GGTS…TPPP, and IDAD…LAVK. 7 disordered regions span residues 493–512, 520–546, 944–1002, 1400–1458, 1856–1881, 1890–1909, and 2336–2358; these read WDAP…LSES, SWKT…SFAG, KWDA…SFAG, KWDA…SESF, KTID…PPGG, and SSWK…PPGG. Positions 496 to 508 are enriched in low complexity; that stretch reads PNGTPNPNPGTTT.

It belongs to the peptidase C25 family.

Functionally, agglutinates erythrocytes. This Porphyromonas gingivalis (Bacteroides gingivalis) protein is Hemagglutinin A (hagA).